The following is a 534-amino-acid chain: Protoheme IX farnesyltransferase (534 aa).

Residues 1–251 (MRREHARAIL…VLLEGKPSLL (251 aa)) form a unknown region. A run of 15 helical transmembrane segments spans residues 17 to 37 (PWLL…GGIV), 39 to 59 (ALTG…ALAI), 83 to 103 (YLTL…FGAI), 128 to 148 (LALA…ALAV), 163 to 183 (VAWA…QVLL), 197 to 217 (LMHL…TTLA), 261 to 281 (GVIS…PAGI), 284 to 304 (LSLV…SHSI), 339 to 359 (IALG…LAAI), 360 to 380 (LALA…KRTS), 384 to 404 (IVIG…AVTG), 411 to 431 (LLLW…LALI), 457 to 477 (IVIY…LGML), 479 to 499 (WAYL…ALKL), and 508 to 528 (AWAL…AMAV). The protoheme IX prenyltransferase stretch occupies residues 252 to 530 (KDYISLTKPG…ILFVAMAVDR (279 aa)).

In the C-terminal section; belongs to the UbiA prenyltransferase family. Protoheme IX farnesyltransferase subfamily.

It localises to the cell membrane. It carries out the reaction heme b + (2E,6E)-farnesyl diphosphate + H2O = Fe(II)-heme o + diphosphate. It participates in porphyrin-containing compound metabolism; heme O biosynthesis; heme O from protoheme: step 1/1. Its function is as follows. Converts heme B (protoheme IX) to heme O by substitution of the vinyl group on carbon 2 of heme B porphyrin ring with a hydroxyethyl farnesyl side group. The sequence is that of Protoheme IX farnesyltransferase (ctaB) from Roseiflexus sp. (strain RS-1).